We begin with the raw amino-acid sequence, 199 residues long: Potassium-transporting ATPase KdpC subunit (199 aa).

Residues 7–27 (PAIVLLLALTLLTGLAYPLAM) traverse the membrane as a helical segment. Residues 67-86 (HGRPSATTAADPQDSSKTVP) are disordered. Residues 71 to 84 (SATTAADPQDSSKT) are compositionally biased toward polar residues.

The protein belongs to the KdpC family. The system is composed of three essential subunits: KdpA, KdpB and KdpC.

It is found in the cell inner membrane. In terms of biological role, part of the high-affinity ATP-driven potassium transport (or Kdp) system, which catalyzes the hydrolysis of ATP coupled with the electrogenic transport of potassium into the cytoplasm. This subunit acts as a catalytic chaperone that increases the ATP-binding affinity of the ATP-hydrolyzing subunit KdpB by the formation of a transient KdpB/KdpC/ATP ternary complex. In Rhodopseudomonas palustris (strain BisB18), this protein is Potassium-transporting ATPase KdpC subunit.